We begin with the raw amino-acid sequence, 254 residues long: uncharacterized protein (254 aa).

5 helical membrane passes run 33–53 (MLWV…LFFI), 70–90 (FNKL…LFKS), 92–112 (FALS…LNFM), 133–153 (FIIF…ILLI), and 223–243 (FLVF…PLIF).

The protein to M.jannaschii MJ0902.

Its subcellular location is the cell membrane. This is an uncharacterized protein from Methanocaldococcus jannaschii (strain ATCC 43067 / DSM 2661 / JAL-1 / JCM 10045 / NBRC 100440) (Methanococcus jannaschii).